Here is a 453-residue protein sequence, read N- to C-terminus: Argininosuccinate lyase (453 aa).

It belongs to the lyase 1 family. Argininosuccinate lyase subfamily.

It localises to the cytoplasm. It catalyses the reaction 2-(N(omega)-L-arginino)succinate = fumarate + L-arginine. Its pathway is amino-acid biosynthesis; L-arginine biosynthesis; L-arginine from L-ornithine and carbamoyl phosphate: step 3/3. The protein is Argininosuccinate lyase of Shewanella loihica (strain ATCC BAA-1088 / PV-4).